The sequence spans 270 residues: Cell division protein DivIB (270 aa).

The Cytoplasmic segment spans residues 1–38; it reads MTRRNNPELNDEREPIDKIKASIDLKKKTIRRNKRKRR. A helical membrane pass occupies residues 39–59; it reads LIKMLQFLIVIGVLIGIYYFD. The Extracellular segment spans residues 60–270; the sequence is KSDASRVHNV…QSAVVKACGS (211 aa). Residues 64–135 form the POTRA domain; that stretch reads SRVHNVRVNG…INLNVTEKKA (72 aa).

This sequence belongs to the FtsQ/DivIB family. DivIB subfamily.

It is found in the cell membrane. Functionally, cell division protein that may be involved in stabilizing or promoting the assembly of the division complex. This chain is Cell division protein DivIB, found in Erysipelothrix rhusiopathiae (strain Fujisawa).